We begin with the raw amino-acid sequence, 446 residues long: MSSSINILSTKLGQNIYAQTPPSQTLTLTNHLLQKNHDTLHIFFRNLNGHNHLVHNLLTRLVLGATPEQLQTAYDDDLPTQRAMPPLVPSIVERLSDNSYFESQITQIDQYTNFLRFFEAEIDRRDSWKDVVIEYVFSRSPIAEKILPLMYDGAFHSIIHLGLGVEFEQPGIIAEALAQAAAHDSFGTDYFFLTAEKRAAGRNEEGETLVNLLQKIRDTPKLVEAGRVQGLIGTMKMRKSILVNAADEIIDIASRFKVTEETLARKTAEMLNLCAYLAGASQRTKDGYEPKIDFFFMHCVTSSIFFSILGRQDWISMRDRVRLVEWKGRLDLMWYALCGVPELDFEFVRTYRGERTGTMSWKELFAIVNEQHDDGHVAKFVRALKNGQEVCGQFEDGEEFMVKGDMWLRIARMAYETTIETNMQNRWVVMAGMDGAWKDFKVQSSD.

This sequence belongs to the AflY oxidoreductase family. The cofactor is NADPH.

It functions in the pathway secondary metabolite biosynthesis. Functionally, baeyer-Villiger oxidase; part of the gene cluster that mediates the biosynthesis of monodictyphenone, a prenyl xanthone derivative. The pathway begins with the synthesis of atrochrysone thioester by the polyketide synthase (PKS) mdpG. The atrochrysone carboxyl ACP thioesterase mdpF then breaks the thioester bond and releases the atrochrysone carboxylic acid from mdpG. The atrochrysone carboxylic acid is then converted to atrochrysone which is further transformed into emodin anthrone. The next step is performed by the anthrone oxygenase mdpH that catalyzes the oxidation of emodinanthrone to emodin. Emodin is further modified to yield monodictyphenone via several steps involving mdpB, mdpC mdpJ, mdpK and mdpL. These enzymes with xptA, xptB and xptC are also proposed to be involved in the synthesis of shamixanthone from emodin. Especially, direct reduction of emodin by the short chain dehydrogenase mdpC followed by dehydration catalyzed by the scytalone dehydratase-like protein mdpB gives loss of oxygen and formation of chrysophanol intermediate in two simple steps. In Emericella nidulans (strain FGSC A4 / ATCC 38163 / CBS 112.46 / NRRL 194 / M139) (Aspergillus nidulans), this protein is Baeyer-Villiger oxidase mdpL.